Here is a 452-residue protein sequence, read N- to C-terminus: Protein tipE (452 aa).

Over 1–20 (MGDEQDKRTGKEKLLFYTTA) the chain is Cytoplasmic. A helical membrane pass occupies residues 21–41 (FFILLGTFSLFAFLFLVPFVI). At 42–274 (EPAFTTIFMQ…ISDLDYWQNT (233 aa)) the chain is on the extracellular side. N-linked (GlcNAc...) asparagine glycans are attached at residues N72, N102, N108, N212, and N237. A helical transmembrane segment spans residues 275–295 (LNLVYSMAIPIPSFIISVIYL). Topologically, residues 296–452 (TYAYFKIYNE…STPPGPTAAV (157 aa)) are cytoplasmic. Residues 423–444 (AISTSNSVQGNLSKTMTTSIST) show a composition bias toward polar residues. A disordered region spans residues 423 to 452 (AISTSNSVQGNLSKTMTTSISTPPGPTAAV).

As to expression, preferentially expressed in the central nervous system of developing embryos, weaker expression is seen in the peripheral nervous system. In pupae and adults, expression is seen predominantly in heads, body and legs.

The protein localises to the membrane. Functionally, enhances para sodium channel function. Required during pupal development to rescue adult paralysis and also protects adult flies against heat-induced lethality. The sequence is that of Protein tipE (tipE) from Drosophila melanogaster (Fruit fly).